The following is a 195-amino-acid chain: Nucleoside-triphosphatase THEP1 (195 aa).

ATP is bound by residues 11-18 and 103-110; these read GRPGSGKS and VVVIDEIG.

It belongs to the THEP1 NTPase family.

The enzyme catalyses a ribonucleoside 5'-triphosphate + H2O = a ribonucleoside 5'-diphosphate + phosphate + H(+). Its function is as follows. Has nucleotide phosphatase activity towards ATP, GTP, CTP, TTP and UTP. May hydrolyze nucleoside diphosphates with lower efficiency. This Korarchaeum cryptofilum (strain OPF8) protein is Nucleoside-triphosphatase THEP1.